The chain runs to 105 residues: Small ribosomal subunit protein eS26 (105 aa).

Belongs to the eukaryotic ribosomal protein eS26 family. Component of the small ribosomal subunit.

The protein resides in the cytoplasm. This chain is Small ribosomal subunit protein eS26 (RPS26), found in Encephalitozoon cuniculi (strain GB-M1) (Microsporidian parasite).